Here is a 220-residue protein sequence, read N- to C-terminus: ATP phosphoribosyltransferase (220 aa).

It belongs to the ATP phosphoribosyltransferase family. Short subfamily. As to quaternary structure, heteromultimer composed of HisG and HisZ subunits.

The protein resides in the cytoplasm. The catalysed reaction is 1-(5-phospho-beta-D-ribosyl)-ATP + diphosphate = 5-phospho-alpha-D-ribose 1-diphosphate + ATP. The protein operates within amino-acid biosynthesis; L-histidine biosynthesis; L-histidine from 5-phospho-alpha-D-ribose 1-diphosphate: step 1/9. Catalyzes the condensation of ATP and 5-phosphoribose 1-diphosphate to form N'-(5'-phosphoribosyl)-ATP (PR-ATP). Has a crucial role in the pathway because the rate of histidine biosynthesis seems to be controlled primarily by regulation of HisG enzymatic activity. The sequence is that of ATP phosphoribosyltransferase from Prochlorococcus marinus (strain NATL1A).